The sequence spans 314 residues: ATP synthase gamma chain (314 aa).

Belongs to the ATPase gamma chain family. F-type ATPases have 2 components, CF(1) - the catalytic core - and CF(0) - the membrane proton channel. CF(1) has five subunits: alpha(3), beta(3), gamma(1), delta(1), epsilon(1). CF(0) has three main subunits: a, b and c.

It is found in the cellular thylakoid membrane. Its function is as follows. Produces ATP from ADP in the presence of a proton gradient across the membrane. The gamma chain is believed to be important in regulating ATPase activity and the flow of protons through the CF(0) complex. The sequence is that of ATP synthase gamma chain from Crocosphaera subtropica (strain ATCC 51142 / BH68) (Cyanothece sp. (strain ATCC 51142)).